A 331-amino-acid polypeptide reads, in one-letter code: Pectate lyase B (331 aa).

The signal sequence occupies residues 1–25 (MKFTGSPLLWPSWLPLPAPPPPLPS). Residue Asn99 is glycosylated (N-linked (GlcNAc...) asparagine). Positions 139, 169, and 173 each coordinate Ca(2+). The active site involves Arg226.

The protein belongs to the polysaccharide lyase 1 family. It depends on Ca(2+) as a cofactor.

It localises to the secreted. It carries out the reaction Eliminative cleavage of (1-&gt;4)-alpha-D-galacturonan to give oligosaccharides with 4-deoxy-alpha-D-galact-4-enuronosyl groups at their non-reducing ends.. It participates in glycan metabolism; pectin degradation; 2-dehydro-3-deoxy-D-gluconate from pectin: step 2/5. Its function is as follows. Acts as a virulence factor active in plant tissue maceration. This is Pectate lyase B (PLB) from Colletotrichum gloeosporioides (Anthracnose fungus).